The chain runs to 235 residues: MAEKVNNFPPLPKFIPLKPCFYQDFEADIPPQHLSMTKRLYYLWMLNSVTLAVNLVGCLAWLIGGGGATNFGLAFLWLILFTPCSYVCWFRPIYKAFKTDSSFSFMAFFFTFMAQLVISIIQAVGIPGWGVCGWIATISFFGTSIGSAVVMLIPTVMFTVMAVFSFIALSMVHKFYRGSGGSLSKAQEEWTTGAWKNPHVQQAAQNAAMGAAQGAMNQPQTQYSATPNYTYSNEM.

Residues 1–39 (MAEKVNNFPPLPKFIPLKPCFYQDFEADIPPQHLSMTKR) are Cytoplasmic-facing. The helical transmembrane segment at 40-60 (LYYLWMLNSVTLAVNLVGCLA) threads the bilayer. The Extracellular portion of the chain corresponds to 61 to 67 (WLIGGGG). Residues 68 to 88 (ATNFGLAFLWLILFTPCSYVC) traverse the membrane as a helical segment. The Cytoplasmic segment spans residues 89-102 (WFRPIYKAFKTDSS). Residues 103–125 (FSFMAFFFTFMAQLVISIIQAVG) form a helical membrane-spanning segment. Over 126-148 (IPGWGVCGWIATISFFGTSIGSA) the chain is Extracellular. Residues 149–169 (VVMLIPTVMFTVMAVFSFIAL) traverse the membrane as a helical segment. Residues 170 to 235 (SMVHKFYRGS…TPNYTYSNEM (66 aa)) lie on the Cytoplasmic side of the membrane.

The protein belongs to the SCAMP family. SCAMP5 subfamily. In terms of assembly, interacts (via C-terminal part) with SYT1 and SYT2; interaction with synaptotagmins making a link with the SNARE molecules. Interacts with SLC9A7.

Its subcellular location is the cell membrane. It is found in the golgi apparatus membrane. The protein localises to the golgi apparatus. The protein resides in the trans-Golgi network membrane. It localises to the recycling endosome membrane. Its subcellular location is the cytoplasmic vesicle. It is found in the secretory vesicle. The protein localises to the synaptic vesicle membrane. Required for the calcium-dependent exocytosis of signal sequence-containing cytokines such as CCL5. Probably acts in cooperation with the SNARE machinery. The polypeptide is Secretory carrier-associated membrane protein 5 (SCAMP5) (Pongo abelii (Sumatran orangutan)).